A 245-amino-acid polypeptide reads, in one-letter code: Thiamine phosphate phosphatase-like protein (245 aa).

The Nucleophile role is filled by Asp9. Mg(2+)-binding residues include Asp9, Asp11, and Asp179. The active-site Proton donor is Asp11.

The protein belongs to the HAD-like hydrolase superfamily. In terms of assembly, monomer. The cofactor is Mg(2+).

It catalyses the reaction thiamine phosphate + H2O = thiamine + phosphate. Functionally, HAD-like hydrolase that has a thiamine monophosphate phosphatase activity in a heterologous system. Does not contribute to thiamine monophosphate phosphatase activity in planta. This is Thiamine phosphate phosphatase-like protein from Arabidopsis thaliana (Mouse-ear cress).